The sequence spans 263 residues: Proteasome subunit alpha type-1 (263 aa).

An N-acetylmethionine modification is found at methionine 1. The residue at position 110 (serine 110) is a Phosphoserine; alternate. An O-linked (GlcNAc) serine; alternate glycan is attached at serine 110. A Glycyl lysine isopeptide (Lys-Gly) (interchain with G-Cter in ubiquitin) cross-link involves residue lysine 115. Phosphoserine is present on serine 177. Lysine 208 participates in a covalent cross-link: Glycyl lysine isopeptide (Lys-Gly) (interchain with G-Cter in ubiquitin). The segment at 232–263 (FLEGLEERPQRKAQPAQPADEPAEKADEPMEH) is disordered. Over residues 253-263 (PAEKADEPMEH) the composition is skewed to basic and acidic residues.

Belongs to the peptidase T1A family. As to quaternary structure, the 26S proteasome consists of a 20S proteasome core and two 19S regulatory subunits. The 20S proteasome core is a barrel-shaped complex made of 28 subunits that are arranged in four stacked rings. The two outer rings are each formed by seven alpha subunits, and the two inner rings are formed by seven beta subunits. The proteolytic activity is exerted by three beta-subunits PSMB5, PSMB6 and PSMB7. Interacts with NOTCH3. Interacts with ZFAND1.

It is found in the cytoplasm. It localises to the nucleus. Functionally, component of the 20S core proteasome complex involved in the proteolytic degradation of most intracellular proteins. This complex plays numerous essential roles within the cell by associating with different regulatory particles. Associated with two 19S regulatory particles, forms the 26S proteasome and thus participates in the ATP-dependent degradation of ubiquitinated proteins. The 26S proteasome plays a key role in the maintenance of protein homeostasis by removing misfolded or damaged proteins that could impair cellular functions, and by removing proteins whose functions are no longer required. Associated with the PA200 or PA28, the 20S proteasome mediates ubiquitin-independent protein degradation. This type of proteolysis is required in several pathways including spermatogenesis (20S-PA200 complex) or generation of a subset of MHC class I-presented antigenic peptides (20S-PA28 complex). The protein is Proteasome subunit alpha type-1 (PSMA1) of Macaca fascicularis (Crab-eating macaque).